The primary structure comprises 410 residues: Angiopoietin-related protein 4 (410 aa).

The signal sequence occupies residues 1 to 23; sequence MRCAPTAGAALMLCAATAGLLSA. The interval 81–106 is disordered; that stretch reads KDPEGSAAPPRAQANLVNPGGGDASP. The stretch at 107–155 forms a coiled coil; the sequence is ETLRSLKTQLEAQNSRIQQLFQKVAQQQRHLEKQQLRIQNLQSQMDHLA. N-linked (GlcNAc...) asparagine glycosylation is present at asparagine 184. One can recognise a Fibrinogen C-terminal domain in the interval 186–408; the sequence is SRLHRLPRDC…ATTILVQPTA (223 aa). Cystine bridges form between cysteine 195–cysteine 223 and cysteine 348–cysteine 361.

As to quaternary structure, homooligomer; disulfide-linked via Cys residues in the N-terminal part of the protein. The homooligomer undergoes proteolytic processing to release the ANGPTL4 C-terminal chain, which circulates as a monomer. The homooligomer unprocessed form is able to interact with the extracellular matrix. N-glycosylated. In terms of processing, forms disulfide-linked dimers and tetramers. Post-translationally, cleaved into a smaller N-terminal chain and a larger chain that contains the fibrinogen C-terminal domain; both cleaved and uncleaved forms are detected in the extracellular space. The cleaved form is not present within the cell.

It localises to the secreted. The protein localises to the extracellular space. It is found in the extracellular matrix. Mediates inactivation of the lipoprotein lipase LPL, and thereby plays a role in the regulation of triglyceride clearance from the blood serum and in lipid metabolism. May also play a role in regulating glucose homeostasis and insulin sensitivity. Inhibits proliferation, migration, and tubule formation of endothelial cells and reduces vascular leakage. Upon heterologous expression, inhibits the adhesion of endothelial cell to the extracellular matrix (ECM), and inhibits the reorganization of the actin cytoskeleton, formation of actin stress fibers and focal adhesions in endothelial cells that have adhered to ANGPTL4-containing ECM (in vitro). Depending on context, may modulate tumor-related angiogenesis. In terms of biological role, mediates inactivation of the lipoprotein lipase LPL, and thereby plays an important role in the regulation of triglyceride clearance from the blood serum and in lipid metabolism. Has higher activity in LPL inactivation than the uncleaved protein. This Bos taurus (Bovine) protein is Angiopoietin-related protein 4 (ANGPTL4).